The following is a 468-amino-acid chain: Glutamate--tRNA ligase (468 aa).

Positions proline 14 to asparagine 24 match the 'HIGH' region motif. A 'KMSKS' region motif is present at residues lysine 246–arginine 250. An ATP-binding site is contributed by lysine 249.

It belongs to the class-I aminoacyl-tRNA synthetase family. Glutamate--tRNA ligase type 1 subfamily. As to quaternary structure, monomer.

The protein resides in the cytoplasm. It carries out the reaction tRNA(Glu) + L-glutamate + ATP = L-glutamyl-tRNA(Glu) + AMP + diphosphate. Its function is as follows. Catalyzes the attachment of glutamate to tRNA(Glu) in a two-step reaction: glutamate is first activated by ATP to form Glu-AMP and then transferred to the acceptor end of tRNA(Glu). In Leptothrix cholodnii (strain ATCC 51168 / LMG 8142 / SP-6) (Leptothrix discophora (strain SP-6)), this protein is Glutamate--tRNA ligase.